The primary structure comprises 199 residues: Transmembrane protein 9B (199 aa).

The N-terminal stretch at 1 to 34 (MASLWCGNLLRLGSGLSMSCLALSVLLLAQLTGA) is a signal peptide. N61 carries an N-linked (GlcNAc...) asparagine glycan. A helical membrane pass occupies residues 106 to 126 (IIIYLSILGLLLLYMVYLTLV). 2 positions are modified to phosphoserine: S143 and S190.

Belongs to the TMEM9 family. In terms of processing, N-glycosylated.

The protein resides in the lysosome membrane. It localises to the early endosome membrane. Enhances production of pro-inflammatory cytokines induced by TNF, IL1B, and TLR ligands. Has a role in TNF activation of both the NF-kappaB and MAPK pathways. The sequence is that of Transmembrane protein 9B (Tmem9b) from Mus musculus (Mouse).